Reading from the N-terminus, the 450-residue chain is Benzene 1,2-dioxygenase subunit alpha (450 aa).

Residues 56-163 (LLGHETHIRK…VETYKGLIFA (108 aa)) enclose the Rieske domain. [2Fe-2S] cluster is bound by residues Cys-96, His-98, Cys-116, and His-119. Fe cation is bound by residues His-222 and His-228.

Belongs to the bacterial ring-hydroxylating dioxygenase alpha subunit family. This dioxygenase system consists of four proteins: the two subunits of the hydroxylase component (BedC1 and BedC2), a ferredoxin (BedB) and a ferredoxin reductase (BedA). It depends on [2Fe-2S] cluster as a cofactor. Fe cation is required as a cofactor.

The catalysed reaction is benzene + NADH + O2 + H(+) = cis-1,2-dihydrobenzene-1,2-diol + NAD(+). It participates in aromatic compound metabolism; benzene degradation; catechol from benzene: step 1/2. The polypeptide is Benzene 1,2-dioxygenase subunit alpha (bedC1) (Pseudomonas putida (Arthrobacter siderocapsulatus)).